The chain runs to 282 residues: Sirohydrochlorin cobaltochelatase CbiKC (282 aa).

Catalysis depends on His166, which acts as the Proton acceptor. Co(2+)-binding residues include His166 and His228.

This sequence belongs to the CbiK family.

It localises to the cytoplasm. It catalyses the reaction Co-sirohydrochlorin + 2 H(+) = sirohydrochlorin + Co(2+). The catalysed reaction is siroheme + 2 H(+) = sirohydrochlorin + Fe(2+). It participates in cofactor biosynthesis; adenosylcobalamin biosynthesis; cob(II)yrinate a,c-diamide from sirohydrochlorin (anaerobic route): step 1/10. The protein operates within porphyrin-containing compound metabolism; siroheme biosynthesis; siroheme from sirohydrochlorin: step 1/1. In terms of biological role, catalyzes the insertion of Co(2+) into sirohydrochlorin as part of the anaerobic pathway to cobalamin biosynthesis. To a lesser extent, is also able to insert Fe(2+) into sirohydrochlorin, yielding siroheme. In Nitratidesulfovibrio vulgaris (strain ATCC 29579 / DSM 644 / CCUG 34227 / NCIMB 8303 / VKM B-1760 / Hildenborough) (Desulfovibrio vulgaris), this protein is Sirohydrochlorin cobaltochelatase CbiKC (cbiKc).